The primary structure comprises 434 residues: Methylenetetrahydrofolate--tRNA-(uracil-5-)-methyltransferase TrmFO (434 aa).

Residue 10 to 15 (GAGLAG) participates in FAD binding.

It belongs to the MnmG family. TrmFO subfamily. FAD serves as cofactor.

The protein localises to the cytoplasm. The catalysed reaction is uridine(54) in tRNA + (6R)-5,10-methylene-5,6,7,8-tetrahydrofolate + NADH + H(+) = 5-methyluridine(54) in tRNA + (6S)-5,6,7,8-tetrahydrofolate + NAD(+). The enzyme catalyses uridine(54) in tRNA + (6R)-5,10-methylene-5,6,7,8-tetrahydrofolate + NADPH + H(+) = 5-methyluridine(54) in tRNA + (6S)-5,6,7,8-tetrahydrofolate + NADP(+). Its function is as follows. Catalyzes the folate-dependent formation of 5-methyl-uridine at position 54 (M-5-U54) in all tRNAs. The protein is Methylenetetrahydrofolate--tRNA-(uracil-5-)-methyltransferase TrmFO of Bacillus cereus (strain AH820).